A 639-amino-acid chain; its full sequence is MSNHSDQIVKKYILNQSFVESSFFTKLSELKLEKYKLDSSYIAIHGFQTHPTKLNKFNDTPVLNLDQSSFDDTLNDSRINIPGELFNVNTIEEFKSLDKLKLLNTWGQNVYSEVTNATSFDYKLFNKFYILTYSDLKKYKFYYWVAYPTLSNTWTVESESQETDTTITQLVETELDNEYGQFFQYYGGKLHKSVQADKEHTFVFIDTCLSKDRKPSSQLKNYLYFIAYKGIKEIDLVTYRNNNLSFTQHLKLDAFTDSPKISGWERTNQGKLGPKLADLGSLINPLQLAEQAVELNLKLMKWRIAPDIDLEIIKKQKVLLLGAGTLGSYVARALLGWGVRSITFVDSGRISFSNPVRQPLFNFEDCFSDSGQGEYKALRAAENLKRVFPGVDAKGICLAVPMVGHPVTDEHKERENYETLVKLFEEHDVIFLLMDSRESRWLPTLIGAANEKIVINAALGFDSYLVMRHGVTNQKDRLGCYYCNDVVAPNDSLSDRTLDQMCTVTRPGGALMASSLAVELLVAILQHPERNLAPHDAETKFGNIPHQIRGFLHNFQQTKLFAPSYVHCSACSPRVITEFKQEGWEFVRKCLDDSQYLEDISGLTKVQQEAELAAKQLLEDLSLDDDVSNDIDEDSEWLS.

A GXGXXG motif motif is present at residues 322–327; the sequence is GAGTLG. The active-site Glycyl thioester intermediate is Cys502.

It belongs to the ATG7 family. As to quaternary structure, homodimer.

Its subcellular location is the cytoplasm. The protein localises to the preautophagosomal structure. Functionally, E1-like activating enzyme involved in the 2 ubiquitin-like systems required for cytoplasm to vacuole transport (Cvt) and autophagy. Activates ATG12 for its conjugation with ATG5 and ATG8 for its conjugation with phosphatidylethanolamine. Both systems are needed for the ATG8 association to Cvt vesicles and autophagosomes membranes. Autophagy is essential for maintenance of amino acid levels and protein synthesis under nitrogen starvation. Required for selective autophagic degradation of the nucleus (nucleophagy) as well as for mitophagy which contributes to regulate mitochondrial quantity and quality by eliminating the mitochondria to a basal level to fulfill cellular energy requirements and preventing excess ROS production. Plays a role in the regulation of filamentous growth and chronological longevity. In Candida albicans (strain SC5314 / ATCC MYA-2876) (Yeast), this protein is Ubiquitin-like modifier-activating enzyme ATG7 (APG7).